We begin with the raw amino-acid sequence, 360 residues long: Ribosomal RNA large subunit methyltransferase M (360 aa).

S-adenosyl-L-methionine contacts are provided by residues S187, 220–223, D239, D259, and D276; that span reads CPGG. Catalysis depends on K305, which acts as the Proton acceptor.

Belongs to the class I-like SAM-binding methyltransferase superfamily. RNA methyltransferase RlmE family. RlmM subfamily. Monomer.

The protein localises to the cytoplasm. It carries out the reaction cytidine(2498) in 23S rRNA + S-adenosyl-L-methionine = 2'-O-methylcytidine(2498) in 23S rRNA + S-adenosyl-L-homocysteine + H(+). In terms of biological role, catalyzes the 2'-O-methylation at nucleotide C2498 in 23S rRNA. In Photobacterium profundum (strain SS9), this protein is Ribosomal RNA large subunit methyltransferase M.